Consider the following 129-residue polypeptide: Small ribosomal subunit protein bS6 (129 aa).

This sequence belongs to the bacterial ribosomal protein bS6 family.

Its function is as follows. Binds together with bS18 to 16S ribosomal RNA. The sequence is that of Small ribosomal subunit protein bS6 from Microcystis aeruginosa (strain NIES-843 / IAM M-2473).